The following is a 263-amino-acid chain: Proteasome subunit alpha type-1 (263 aa).

M1 bears the N-acetylmethionine mark. Phosphoserine; alternate is present on S110. S110 carries O-linked (GlcNAc) serine; alternate glycosylation. K115 is covalently cross-linked (Glycyl lysine isopeptide (Lys-Gly) (interchain with G-Cter in ubiquitin)). S177 is modified (phosphoserine). K208 participates in a covalent cross-link: Glycyl lysine isopeptide (Lys-Gly) (interchain with G-Cter in ubiquitin). The segment at 232 to 263 (FLDGLEERPQRKAQPSQAADEPAEKADEPMEH) is disordered. A compositionally biased stretch (basic and acidic residues) spans 253 to 263 (PAEKADEPMEH).

It belongs to the peptidase T1A family. The 26S proteasome consists of a 20S proteasome core and two 19S regulatory subunits. The 20S proteasome core is a barrel-shaped complex made of 28 subunits that are arranged in four stacked rings. The two outer rings are each formed by seven alpha subunits, and the two inner rings are formed by seven beta subunits. The proteolytic activity is exerted by three beta-subunits PSMB5, PSMB6 and PSMB7. Interacts with NOTCH3. Interacts with ZFAND1. In terms of processing, proteolytically cleaved from a C-terminal extension in the course of the conversion of the proteasome from its latent form into its active form. As to expression, ubiquitous.

Its subcellular location is the cytoplasm. The protein resides in the nucleus. Its function is as follows. Component of the 20S core proteasome complex involved in the proteolytic degradation of most intracellular proteins. This complex plays numerous essential roles within the cell by associating with different regulatory particles. Associated with two 19S regulatory particles, forms the 26S proteasome and thus participates in the ATP-dependent degradation of ubiquitinated proteins. The 26S proteasome plays a key role in the maintenance of protein homeostasis by removing misfolded or damaged proteins that could impair cellular functions, and by removing proteins whose functions are no longer required. Associated with the PA200 or PA28, the 20S proteasome mediates ubiquitin-independent protein degradation. This type of proteolysis is required in several pathways including spermatogenesis (20S-PA200 complex) or generation of a subset of MHC class I-presented antigenic peptides (20S-PA28 complex). The chain is Proteasome subunit alpha type-1 (Psma1) from Rattus norvegicus (Rat).